Here is a 518-residue protein sequence, read N- to C-terminus: GMP synthase [glutamine-hydrolyzing] (518 aa).

Residues arginine 6–aspartate 200 enclose the Glutamine amidotransferase type-1 domain. Residue cysteine 84 is the Nucleophile of the active site. Catalysis depends on residues histidine 175 and glutamate 177. The region spanning tryptophan 201–arginine 393 is the GMPS ATP-PPase domain. Serine 228–serine 234 is a binding site for ATP.

Homodimer.

It catalyses the reaction XMP + L-glutamine + ATP + H2O = GMP + L-glutamate + AMP + diphosphate + 2 H(+). The protein operates within purine metabolism; GMP biosynthesis; GMP from XMP (L-Gln route): step 1/1. Functionally, catalyzes the synthesis of GMP from XMP. The chain is GMP synthase [glutamine-hydrolyzing] from Cereibacter sphaeroides (strain ATCC 17029 / ATH 2.4.9) (Rhodobacter sphaeroides).